A 150-amino-acid polypeptide reads, in one-letter code: Single-stranded DNA-binding protein rim1, mitochondrial (150 aa).

The N-terminal 22 residues, 1 to 22 (MLFLKSSRAFSKRLFSSSTVRY), are a transit peptide targeting the mitochondrion. The SSB domain maps to 25-125 (IQRLTLTGNL…HVSADVLFYP (101 aa)). The tract at residues 127–150 (NKNGDESGEETHPELDADPMINSF) is disordered. Residues 128 to 141 (KNGDESGEETHPEL) are compositionally biased toward basic and acidic residues.

It localises to the mitochondrion. In terms of biological role, this protein binds preferentially and cooperatively to ss-DNA. Involved in mitochondrial DNA replication. The chain is Single-stranded DNA-binding protein rim1, mitochondrial (rim1) from Schizosaccharomyces pombe (strain 972 / ATCC 24843) (Fission yeast).